The primary structure comprises 341 residues: Glycerol-3-phosphate dehydrogenase [NAD(P)+] 1 (341 aa).

Residues Ser11, Trp12, Arg32, Arg33, and Lys106 each contribute to the NADPH site. Lys106, Gly137, and Ser139 together coordinate sn-glycerol 3-phosphate. An NADPH-binding site is contributed by Ala141. Sn-glycerol 3-phosphate contacts are provided by Lys192, Asp245, Ser255, Arg256, and Asn257. Lys192 serves as the catalytic Proton acceptor. Arg256 lines the NADPH pocket. Positions 280 and 282 each coordinate NADPH.

Belongs to the NAD-dependent glycerol-3-phosphate dehydrogenase family.

The protein resides in the cytoplasm. It catalyses the reaction sn-glycerol 3-phosphate + NAD(+) = dihydroxyacetone phosphate + NADH + H(+). The catalysed reaction is sn-glycerol 3-phosphate + NADP(+) = dihydroxyacetone phosphate + NADPH + H(+). Its pathway is membrane lipid metabolism; glycerophospholipid metabolism. In terms of biological role, catalyzes the reduction of the glycolytic intermediate dihydroxyacetone phosphate (DHAP) to sn-glycerol 3-phosphate (G3P), the key precursor for phospholipid synthesis. This chain is Glycerol-3-phosphate dehydrogenase [NAD(P)+] 1, found in Salinibacter ruber (strain DSM 13855 / M31).